Reading from the N-terminus, the 159-residue chain is UPF0260 protein Avi_1324 (159 aa).

The protein belongs to the UPF0260 family.

The sequence is that of UPF0260 protein Avi_1324 from Allorhizobium ampelinum (strain ATCC BAA-846 / DSM 112012 / S4) (Agrobacterium vitis (strain S4)).